The sequence spans 293 residues: Undecaprenyl-diphosphatase (293 aa).

6 consecutive transmembrane segments (helical) span residues 74–94 (VLVF…AGVF), 107–127 (WMII…KDLI), 134–154 (MWIT…AEKM), 209–229 (FLLA…DAFA), 243–263 (VGTL…MKFV), and 271–291 (FAAY…LGML).

The protein belongs to the UppP family.

The protein localises to the cell membrane. The catalysed reaction is di-trans,octa-cis-undecaprenyl diphosphate + H2O = di-trans,octa-cis-undecaprenyl phosphate + phosphate + H(+). Catalyzes the dephosphorylation of undecaprenyl diphosphate (UPP). Confers resistance to bacitracin. The chain is Undecaprenyl-diphosphatase from Corynebacterium glutamicum (strain ATCC 13032 / DSM 20300 / JCM 1318 / BCRC 11384 / CCUG 27702 / LMG 3730 / NBRC 12168 / NCIMB 10025 / NRRL B-2784 / 534).